The chain runs to 373 residues: Histidinol-phosphate aminotransferase 2 (373 aa).

Lys229 is subject to N6-(pyridoxal phosphate)lysine.

This sequence belongs to the class-II pyridoxal-phosphate-dependent aminotransferase family. Histidinol-phosphate aminotransferase subfamily. Homodimer. The cofactor is pyridoxal 5'-phosphate.

The catalysed reaction is L-histidinol phosphate + 2-oxoglutarate = 3-(imidazol-4-yl)-2-oxopropyl phosphate + L-glutamate. The protein operates within amino-acid biosynthesis; L-histidine biosynthesis; L-histidine from 5-phospho-alpha-D-ribose 1-diphosphate: step 7/9. In Hydrogenovibrio crunogenus (strain DSM 25203 / XCL-2) (Thiomicrospira crunogena), this protein is Histidinol-phosphate aminotransferase 2.